A 491-amino-acid chain; its full sequence is MNAAAEAEFNILLATDSYKVTHYKQYPPNTSKVYSYFECREKKTENSKIRKVKYEETVFYGLQYILNKYLKGKVVTKEKIQEAKEVYKEHFQDDVFNEKGWNYILEKYDGHLPIEVKAVPEGSVIPRGNVLFTVENTDPECYWLTNWIETILVQSWYPITVATNSREQKKILAKYLLETSGNLDGLEYKLHDFGYRGVSSQETAGIGASAHLVNFKGTDTVAGIALIKKYYGTKDPVPGYSVPAAEHSTITAWGKDHEKDAFEHIVTQFSSVPVSVVSDSYDIYNACEKIWGEDLRHLIVSRSTEAPLIIRPDSGNPLDTVLKVLDILGKKFPVTENSKGYKLLPPYLRVIQGDGVDINTLQEIVEGMKQKKWSIENIAFGSGGALLQKLTRDLLNCSFKCSYVVTNGLGINVFKDPVADPNKRSKKGRLSLHRTPGGNFVTLEEGKGDLEEYGHDLLHTVFKNGKVTKSYSFDEVRKNAQLNIELEAAPH.

At M1 the chain carries N-acetylmethionine. Y188 is modified (phosphotyrosine). R196 serves as a coordination point for diphosphate. D219 lines the beta-nicotinamide D-ribonucleotide pocket. H247 and R311 together coordinate diphosphate. Beta-nicotinamide D-ribonucleotide contacts are provided by residues 311–313, 353–354, G384, and R392; these read RPD and GD. The residue at position 472 (S472) is a Phosphoserine.

This sequence belongs to the NAPRTase family. As to quaternary structure, homodimer.

The protein resides in the nucleus. It localises to the cytoplasm. It is found in the secreted. The catalysed reaction is beta-nicotinamide D-ribonucleotide + diphosphate = 5-phospho-alpha-D-ribose 1-diphosphate + nicotinamide + H(+). It functions in the pathway cofactor biosynthesis; NAD(+) biosynthesis; nicotinamide D-ribonucleotide from 5-phospho-alpha-D-ribose 1-diphosphate and nicotinamide: step 1/1. In terms of biological role, catalyzes the condensation of nicotinamide with 5-phosphoribosyl-1-pyrophosphate to yield nicotinamide mononucleotide, an intermediate in the biosynthesis of NAD. It is the rate limiting component in the mammalian NAD biosynthesis pathway. The secreted form behaves both as a cytokine with immunomodulating properties and an adipokine with anti-diabetic properties, it has no enzymatic activity, partly because of lack of activation by ATP, which has a low level in extracellular space and plasma. Plays a role in the modulation of circadian clock function. Plays a role in the modulation of circadian clock function. NAMPT-dependent oscillatory production of NAD regulates oscillation of clock target gene expression by releasing the core clock component: CLOCK-BMAL1 heterodimer from NAD-dependent SIRT1-mediated suppression. In Sus scrofa (Pig), this protein is Nicotinamide phosphoribosyltransferase (NAMPT).